The following is a 467-amino-acid chain: UDP-N-acetylmuramate--L-alanine ligase (467 aa).

114–120 (GTHGKTT) contributes to the ATP binding site.

Belongs to the MurCDEF family.

Its subcellular location is the cytoplasm. The enzyme catalyses UDP-N-acetyl-alpha-D-muramate + L-alanine + ATP = UDP-N-acetyl-alpha-D-muramoyl-L-alanine + ADP + phosphate + H(+). The protein operates within cell wall biogenesis; peptidoglycan biosynthesis. Its function is as follows. Cell wall formation. The chain is UDP-N-acetylmuramate--L-alanine ligase from Bradyrhizobium sp. (strain BTAi1 / ATCC BAA-1182).